Reading from the N-terminus, the 365-residue chain is MGRKKIQISRILDQRNRQVTFTKRKFGLMKKAYELSVLCDCEIALIIFNSANRLFQYASTDMDRVLLKYTEYSEPHESRTNTDILETLKRRGIGLDGPELEPDEGPEEPGEKFRRLAGEGGDPALPRPRLYPAAPAMPSPDVVYGALPPPGCDPSGLGEALPAQSRPSPFRPAAPKAGPPGLVHPLFSPSHLTSKTPPPLYLPTEGRRSDLPGGLAGPRGGLNTSRSLYSGLQNPCSTATPGPPLGSFPFLPGGPPVGAEAWARRVPQPAAPPRRPPQSASSLSASLRPPGAPATFLRPSPIPCSSPGPWQSLCGLGPPCAGCPWPTAGPGRRSPGGTSPERSPGTARARGDPTSLQASSEKTQQ.

One can recognise an MADS-box domain in the interval 3–57 (RKKIQISRILDQRNRQVTFTKRKFGLMKKAYELSVLCDCEIALIIFNSANRLFQY). The segment at residues 58 to 86 (ASTDMDRVLLKYTEYSEPHESRTNTDILE) is a DNA-binding region (mef2-type). Disordered regions lie at residues 94–124 (GLDG…GDPA), 142–309 (VVYG…SPGP), and 321–365 (AGCP…KTQQ). Positions 98 to 108 (PELEPDEGPEE) are enriched in acidic residues. Residues 223–240 (NTSRSLYSGLQNPCSTAT) are compositionally biased toward polar residues. 2 stretches are compositionally biased toward low complexity: residues 277-289 (PQSA…SLRP) and 326-346 (PTAG…SPGT). The span at 354-365 (TSLQASSEKTQQ) shows a compositional bias: polar residues.

This sequence belongs to the MEF2 family. Interacts with HDAC7. Heterodimer. Interacts with HDAC9. As to expression, expressed in skeletal and cardiac muscle and brain.

It is found in the nucleus. Transcriptional activator which binds specifically to the MEF2 element, 5'-YTA[AT](4)TAR-3', found in numerous muscle-specific genes. Activates transcription via this element. May be involved in muscle-specific and/or growth factor-related transcription. This is Myocyte-specific enhancer factor 2B (MEF2B) from Homo sapiens (Human).